The following is a 485-amino-acid chain: Aspartyl/glutamyl-tRNA(Asn/Gln) amidotransferase subunit B (485 aa).

The protein belongs to the GatB/GatE family. GatB subfamily. Heterotrimer of A, B and C subunits.

The enzyme catalyses L-glutamyl-tRNA(Gln) + L-glutamine + ATP + H2O = L-glutaminyl-tRNA(Gln) + L-glutamate + ADP + phosphate + H(+). It carries out the reaction L-aspartyl-tRNA(Asn) + L-glutamine + ATP + H2O = L-asparaginyl-tRNA(Asn) + L-glutamate + ADP + phosphate + 2 H(+). Functionally, allows the formation of correctly charged Asn-tRNA(Asn) or Gln-tRNA(Gln) through the transamidation of misacylated Asp-tRNA(Asn) or Glu-tRNA(Gln) in organisms which lack either or both of asparaginyl-tRNA or glutaminyl-tRNA synthetases. The reaction takes place in the presence of glutamine and ATP through an activated phospho-Asp-tRNA(Asn) or phospho-Glu-tRNA(Gln). The protein is Aspartyl/glutamyl-tRNA(Asn/Gln) amidotransferase subunit B of Methylacidiphilum infernorum (isolate V4) (Methylokorus infernorum (strain V4)).